Here is a 229-residue protein sequence, read N- to C-terminus: Protein 33K (229 aa).

The interval 1–157 (MAPKKKLQLP…GALRLAPNEP (157 aa)) is disordered. Over residues 14–54 (TDEEEYWDSQAEEVLDEEEEDMMEDWESLDEEASEVEEVSD) the composition is skewed to acidic residues. Low complexity-rich tracts occupy residues 55–64 (ETPSPSVAFP), 71–82 (SATGSSMATTSA), and 100–122 (TTGT…AAAT). The tract at residues 172-199 (YAIFQQSRGQEQELKIKNRSLRSLTRSC) is necessary for nuclear subcellular location. The tract at residues 178–198 (SRGQEQELKIKNRSLRSLTRS) is RS-repeat; required for splicing enhancer activity.

This sequence belongs to the adenoviridae splicing factor family. Homooligomer. Interacts with DBP; this interaction occurs at a unique vertex during genome packaging. Interacts with IVa2; this interaction occurs at a unique vertex during genome packaging and seems to potentiate IVa2 and 33K oligomerization. In terms of processing, phosphorylated in vitro by human PKA and PRKDC. PRKDC inhibits, whereas PKA activates the splicing factor.

It is found in the host nucleus. Its function is as follows. Promotes alternative splicing of late transcripts by promoting splicing at weak 3' splice sites. Required for the temporal activation of major late pre-mRNA splicing at late times of infection. Induces the splicing and expression of the late capsid vertex protein. In terms of biological role, probably functions as the small terminase that is part of the molecular motor that translocates genomic DNA in empty capsid during DNA packaging. This motor is located at a unique vertex and comprises at least the IVa2 ATPase, the small terminase 33K and probably a portal. Forms a ring-like structure of about 17 nm in which genomic DNA is translocated into the capsid. Stimulates IVa2 ATPase activity in the presence of the viral genome. Once the DNA is packaged, the terminase detaches: the 33K protein is present in the empty particles, but not in the mature virions. Also involved in virion assembly. The sequence is that of Protein 33K from Homo sapiens (Human).